Reading from the N-terminus, the 495-residue chain is Keratin, type II cuticular 87 (495 aa).

The tract at residues 1-111 (MSCFSSRLGA…PNAQCVKHEE (111 aa)) is head. The IF rod domain occupies 111 to 422 (EKEQIKCLNS…RLLEGEEQRL (312 aa)). The segment at 112–146 (KEQIKCLNSKFAAFIDKVRFLEQQNKLLETKWQFY) is coil 1A. Residues 147–156 (QNRKCCESNM) form a linker 1 region. A coil 1B region spans residues 157 to 257 (EPLFEGYIEA…YEEETRLLHS (101 aa)). The tract at residues 258–274 (HISDTSVVVKMDNSRDL) is linker 12. Residues 275–418 (NMDCVVAEIK…ITYRRLLEGE (144 aa)) are coil 2. Residues 419-494 (EQRLCEGVGS…TCGSSRSVRF (76 aa)) are tail.

The protein belongs to the intermediate filament family. Heterotetramer of two type I and two type II keratins.

The polypeptide is Keratin, type II cuticular 87 (Mus musculus (Mouse)).